Reading from the N-terminus, the 354-residue chain is Putative succinyl-diaminopimelate desuccinylase DapE (354 aa).

H69 contributes to the Zn(2+) binding site. D71 is a catalytic residue. Position 95 (D95) interacts with Zn(2+). Catalysis depends on E125, which acts as the Proton acceptor. Positions 126, 154, and 330 each coordinate Zn(2+).

The protein belongs to the peptidase M20A family. In terms of assembly, homodimer. Zn(2+) serves as cofactor. It depends on Co(2+) as a cofactor.

The catalysed reaction is N-succinyl-(2S,6S)-2,6-diaminopimelate + H2O = (2S,6S)-2,6-diaminopimelate + succinate. The protein operates within amino-acid biosynthesis; L-lysine biosynthesis via DAP pathway; LL-2,6-diaminopimelate from (S)-tetrahydrodipicolinate (succinylase route): step 3/3. In terms of biological role, catalyzes the hydrolysis of N-succinyl-L,L-diaminopimelic acid (SDAP), forming succinate and LL-2,6-diaminoheptanedioate (DAP), an intermediate involved in the bacterial biosynthesis of lysine and meso-diaminopimelic acid. This chain is Putative succinyl-diaminopimelate desuccinylase DapE (dapE), found in Mycobacterium tuberculosis (strain CDC 1551 / Oshkosh).